The sequence spans 125 residues: uncharacterized protein (125 aa).

The protein belongs to the HesB/IscA family.

This is an uncharacterized protein from Azospirillum brasilense.